Reading from the N-terminus, the 179-residue chain is ATP synthase subunit b (179 aa).

The chain crosses the membrane as a helical span at residues 27–47 (TAITFLVMLAVLAKFAWGPIV).

It belongs to the ATPase B chain family. In terms of assembly, F-type ATPases have 2 components, F(1) - the catalytic core - and F(0) - the membrane proton channel. F(1) has five subunits: alpha(3), beta(3), gamma(1), delta(1), epsilon(1). F(0) has three main subunits: a(1), b(2) and c(10-14). The alpha and beta chains form an alternating ring which encloses part of the gamma chain. F(1) is attached to F(0) by a central stalk formed by the gamma and epsilon chains, while a peripheral stalk is formed by the delta and b chains.

The protein localises to the cell inner membrane. Functionally, f(1)F(0) ATP synthase produces ATP from ADP in the presence of a proton or sodium gradient. F-type ATPases consist of two structural domains, F(1) containing the extramembraneous catalytic core and F(0) containing the membrane proton channel, linked together by a central stalk and a peripheral stalk. During catalysis, ATP synthesis in the catalytic domain of F(1) is coupled via a rotary mechanism of the central stalk subunits to proton translocation. Component of the F(0) channel, it forms part of the peripheral stalk, linking F(1) to F(0). In Anaeromyxobacter dehalogenans (strain 2CP-C), this protein is ATP synthase subunit b.